A 201-amino-acid chain; its full sequence is CASP-like protein 1E1 (201 aa).

The Cytoplasmic segment spans residues 1-36; that stretch reads MESQFRPGFDVSQGAGGRASKFGDVVAPTSSTQLPG. Residues 37–57 traverse the membrane as a helical segment; it reads IILRIVAIVLTFISAVVMGAA. Residues 58-87 are Extracellular-facing; sequence RQTTTVTGIDAETALLTSITVTVKSTYSAA. A helical transmembrane segment spans residues 88 to 108; that stretch reads YVYFVVANVLVFFYSVVSLVL. Topologically, residues 109-127 are cytoplasmic; it reads SMVNKARLTSMSLPFSIAD. The chain crosses the membrane as a helical span at residues 128–148; sequence LLMVVLLFSSNGAAAAISVVA. The Extracellular portion of the chain corresponds to 149–173; that stretch reads EKGQQNLAGWDKICNLFGGLCARVN. The chain crosses the membrane as a helical span at residues 174 to 194; the sequence is AAIVLSMLASVAYVILVVFGM. The Cytoplasmic segment spans residues 195–201; sequence ANLRRSQ.

It belongs to the Casparian strip membrane proteins (CASP) family. In terms of assembly, homodimer and heterodimers.

It localises to the cell membrane. This chain is CASP-like protein 1E1, found in Musa acuminata (Banana).